The chain runs to 456 residues: Putative E3 ubiquitin-protein ligase XBAT31 (456 aa).

ANK repeat units follow at residues 45-74 (DRHSVLHVAAANGQIEILSLLLERFTNPDL), 78-107 (HKQTPLMLAAMYGRISCVKKLAEVGANILM), 112-141 (NRRTCLHYAAYYGHANCVQAILSAAQSSPV), 157-186 (KGATPLHLAARQRRPECVNVLLDSGSLVCA), and 194-224 (PGSTPLHLAARSGSIDCVRKLLAWGADRLQR). An RING-type zinc finger spans residues 319 to 368 (CCICFEQVCTIEVKDCGHQMCAQCTLALCCHNKPNPTTSTVTPPVCPFCR).

The catalysed reaction is S-ubiquitinyl-[E2 ubiquitin-conjugating enzyme]-L-cysteine + [acceptor protein]-L-lysine = [E2 ubiquitin-conjugating enzyme]-L-cysteine + N(6)-ubiquitinyl-[acceptor protein]-L-lysine.. It functions in the pathway protein modification; protein ubiquitination. Its function is as follows. No E3 ubiquitin-protein ligase activity observed when associated with the E2 enzyme UBC8 in vitro. In Arabidopsis thaliana (Mouse-ear cress), this protein is Putative E3 ubiquitin-protein ligase XBAT31 (XBAT31).